We begin with the raw amino-acid sequence, 357 residues long: 3-isopropylmalate dehydrogenase (357 aa).

Residue 76 to 89 coordinates NAD(+); the sequence is GPQWDTIDPALRPE. R96, R106, R134, and D224 together coordinate substrate. Residues D224, D248, and D252 each contribute to the Mg(2+) site. Residue 282–294 participates in NAD(+) binding; it reads GSAPDIAGQGIAN.

The protein belongs to the isocitrate and isopropylmalate dehydrogenases family. LeuB type 1 subfamily. In terms of assembly, homodimer. Mg(2+) serves as cofactor. It depends on Mn(2+) as a cofactor.

Its subcellular location is the cytoplasm. It carries out the reaction (2R,3S)-3-isopropylmalate + NAD(+) = 4-methyl-2-oxopentanoate + CO2 + NADH. Its pathway is amino-acid biosynthesis; L-leucine biosynthesis; L-leucine from 3-methyl-2-oxobutanoate: step 3/4. In terms of biological role, catalyzes the oxidation of 3-carboxy-2-hydroxy-4-methylpentanoate (3-isopropylmalate) to 3-carboxy-4-methyl-2-oxopentanoate. The product decarboxylates to 4-methyl-2 oxopentanoate. The protein is 3-isopropylmalate dehydrogenase of Xanthomonas campestris pv. campestris (strain 8004).